The sequence spans 251 residues: Capsid protein (251 aa).

The segment at 1-27 is disordered; that stretch reads MPKRDLPWRSMPGTSKTSRNANYSPRA. A Bipartite nuclear localization signal motif is present at residues 3–20; that stretch reads KRDLPWRSMPGTSKTSRN. Polar residues predominate over residues 12–23; sequence PGTSKTSRNANY. Positions 35–49 match the Nuclear localization signal motif; that stretch reads KASEWVHRPMYRKPR. A zinc finger spans residues 63–80; the sequence is CEGPCKVQSYEQRHDISH. The Nuclear export signal motif lies at 96–117; it reads ITHRVGKRFCVKSVYILGKIWM. Residues 195 to 242 carry the Bipartite nuclear localization signal motif; that stretch reads KRFWKVNNHVVYNHQEAGKYENHTENALLLYMACTHASNPVYATLKIR.

The protein belongs to the geminiviridae capsid protein family. Homomultimer. Binds to single-stranded and double-stranded viral DNA. Interacts (via nuclear localization signals) with host importin alpha-1a.

The protein localises to the virion. It localises to the host nucleus. In terms of biological role, encapsidates the viral DNA into characteristic twinned ('geminate') particles. Binds the genomic viral ssDNA and shuttles it into and out of the cell nucleus. The CP of bipartite geminiviruses is not required for cell-to-cell or systemic movement. This chain is Capsid protein, found in Abutilon (Upland cotton).